An 810-amino-acid chain; its full sequence is MQSLFSNKYKFKDTEEKLNAYWDKIKLYKWKNLQGKQFIIDTPPPTISGQLHIGHVFSYCHTDFIARYQRMLGKDVLYPIGFDDNGLPTERLVEKIKKVRAADIDRKEFKALCNEVSAKFRMEFKILFQSLGISYDWDLEYHTISEEIQKLSQMSFIALYNMGKIYRKLQPIFWDCADRTAIARVEVEEKEMSSFMSTIAFSTEAGELINIATTRPELMPACVALFFNPLDIRYQHLQGQYAIVPIFGNKVPILSDEQVKIDKGTGLVMCCTFGDELDVYWWNKHNLNTQIIISKSGTLDLKHNIAETDTLSGKLHGVSIVEARKLVLETLSKCNLLIKKEEILHNVKCAERSGMPIEILLSNQWFIKVVEIKHELLEQVRKINWYPQSMRKQIEMWIDGLNWDWCISRQRYFGIPFPVWYSKRDNEEIIIPDVNELPIDPTETLPQGYSKEEVEADVDVMDTWATSSLSPQFNSIHTGINSIPLIPASLRAQSHEIIRSWAFYTILQAYYHHNSIPWENIMVSGWCLAADKSKMSKSKGNALIPNQLLQEYGADVIRYWAANSRLGSDTVFSDEVLQLGKRLVTKLWNASKFVSMFVSQCQIPDLNCVTETMDKWVLTKLYKVIVKATESFNVFEYCVALDYIESFFWKDFCDNYLELVKKRAYGESVTNKENLSAVNTLSFVLMALLKMLAPFMPYITEEIYSTLYNNGSIHDHDNWPVVNTSLCNEMDEQLGEDFIEILNQVRKIKANAQLSVKCKIYKLIINSENYDFPTSWENDLKAVCNAEHIVQDKRTSYYNDKFLISVQFAN.

A 'HIGH' region motif is present at residues 45-55 (PTISGQLHIGH). The short motif at 534-538 (KMSKS) is the 'KMSKS' region element. Residue K537 coordinates ATP.

This sequence belongs to the class-I aminoacyl-tRNA synthetase family. ValS type 2 subfamily. In terms of assembly, monomer.

The protein localises to the cytoplasm. The catalysed reaction is tRNA(Val) + L-valine + ATP = L-valyl-tRNA(Val) + AMP + diphosphate. Its function is as follows. Catalyzes the attachment of valine to tRNA(Val). As ValRS can inadvertently accommodate and process structurally similar amino acids such as threonine, to avoid such errors, it has a 'posttransfer' editing activity that hydrolyzes mischarged Thr-tRNA(Val) in a tRNA-dependent manner. This Ehrlichia ruminantium (strain Welgevonden) protein is Valine--tRNA ligase.